The chain runs to 473 residues: Photosystem II CP43 reaction center protein (473 aa).

Positions M1–E14 are excised as a propeptide. T15 is modified (N-acetylthreonine). Residue T15 is modified to Phosphothreonine. The next 5 membrane-spanning stretches (helical) occupy residues L69 to A93, L134 to N155, K178 to S200, K255 to S275, and W291 to S312. A [CaMn4O5] cluster-binding site is contributed by E367. The chain crosses the membrane as a helical span at residues R447–P471.

It belongs to the PsbB/PsbC family. PsbC subfamily. In terms of assembly, PSII is composed of 1 copy each of membrane proteins PsbA, PsbB, PsbC, PsbD, PsbE, PsbF, PsbH, PsbI, PsbJ, PsbK, PsbL, PsbM, PsbT, PsbX, PsbY, PsbZ, Psb30/Ycf12, at least 3 peripheral proteins of the oxygen-evolving complex and a large number of cofactors. It forms dimeric complexes. It depends on Binds multiple chlorophylls and provides some of the ligands for the Ca-4Mn-5O cluster of the oxygen-evolving complex. It may also provide a ligand for a Cl- that is required for oxygen evolution. PSII binds additional chlorophylls, carotenoids and specific lipids. as a cofactor.

It localises to the plastid. Its subcellular location is the chloroplast thylakoid membrane. One of the components of the core complex of photosystem II (PSII). It binds chlorophyll and helps catalyze the primary light-induced photochemical processes of PSII. PSII is a light-driven water:plastoquinone oxidoreductase, using light energy to abstract electrons from H(2)O, generating O(2) and a proton gradient subsequently used for ATP formation. The polypeptide is Photosystem II CP43 reaction center protein (Chlorella vulgaris (Green alga)).